Here is a 318-residue protein sequence, read N- to C-terminus: N-succinylornithine carbamoyltransferase (318 aa).

Carbamoyl phosphate-binding positions include 47–50, W75, and R110; that span reads SLRT. Residue E142 coordinates N(2)-succinyl-L-ornithine. 147–150 provides a ligand contact to carbamoyl phosphate; that stretch reads HPLQ. Positions 176 and 236 each coordinate N(2)-succinyl-L-ornithine. A carbamoyl phosphate-binding site is contributed by 274-275; it reads CL. R278 lines the N(2)-succinyl-L-ornithine pocket. R302 serves as a coordination point for carbamoyl phosphate.

The protein belongs to the aspartate/ornithine carbamoyltransferase superfamily. SOTCase family. In terms of assembly, homotrimer.

The catalysed reaction is N(2)-succinyl-L-ornithine + carbamoyl phosphate = N(2)-succinyl-L-citrulline + phosphate + H(+). The protein operates within amino-acid biosynthesis; L-arginine biosynthesis. In terms of biological role, catalyzes the transfer of the carbamoyl group from carbamoyl phosphate to the delta-amino group of N(2)-succinyl-L-ornithine to produce N(2)-succinyl-L-citrulline. Is essential for arginine biosynthesis. Has no activity with either L-ornithine or L-aspartate as substrate. Also has no detectable AOTCase activity, being unable to convert N(2)-acetyl-L-ornithine to N(2)-acetyl-L-citrulline. This is N-succinylornithine carbamoyltransferase from Bacteroides thetaiotaomicron (strain ATCC 29148 / DSM 2079 / JCM 5827 / CCUG 10774 / NCTC 10582 / VPI-5482 / E50).